We begin with the raw amino-acid sequence, 499 residues long: MFITSKEMRRIELNSRWLGFEEDFMMENAGAGVARVVIGEYSPNDVLVVCGTGGNGGDGFVTARHLDSEGVDVDVLLVGRREAIKNEAAELNLRRLDRAGIPVQEVRDSEDLESVDFERDVVVDALLGFGIRGRLREPVRSAVLRINEASRAGTRVVSIDIPTGLDPDSGETPDVAVEADLVVSIHRHKRGVRKLRDVFLRRVNAGIPEIAERICGPGDLITSDIWRRDPWSHKGQHGRVLIIGGSRKYVGAPQLAARGALRAGVDLVFLLTVDAVPKNDPNVIYRAVPAERLEPEHLDEVDLEGVDTVVVGPGLGADADSVGILRELAESFDGMIIVDADGLRGISGVNVDDRFVLTPHAGEFRREFGEELGRSLEDRSEAVRRVSEELGCTILLKGRVDVIGSPDGEIRWNVTGTPAMTVGGTGDVLAGVVAGVAARCREGFEAACIGAFVVGSAGCLAERRLSQGLTAEDVAEYVPKVLRNPWAAEPEAVTEVRRD.

An NAD(P)H-hydrate epimerase region spans residues 1–217; sequence MFITSKEMRR…PEIAERICGP (217 aa). Residues 8–213 enclose the YjeF N-terminal domain; sequence MRRIELNSRW…NAGIPEIAER (206 aa). Residues 54-58 form an NADPHX 1; for epimerase activity region; sequence GNGGD. K(+) contacts are provided by Asn55 and Asp124. An NADPHX 1; for epimerase activity region spans residues 128-134; that stretch reads GFGIRGR. Asp160 contributes to the (6S)-NADPHX binding site. Thr163 provides a ligand contact to K(+). The YjeF C-terminal domain maps to 217–485; it reads PGDLITSDIW…EYVPKVLRNP (269 aa). The ADP-dependent (S)-NAD(P)H-hydrate dehydratase stretch occupies residues 217–499; sequence PGDLITSDIW…PEAVTEVRRD (283 aa). A (6S)-NADPHX-binding site is contributed by Gly314. An NADPHX 2; for dehydratase activity region spans residues 360–366; sequence HAGEFRR. Residues 397–401 and 417–426 each bind ADP; these read KGRVD and TPAMTVGGTG. Asp427 is a (6S)-NADPHX binding site.

The protein in the N-terminal section; belongs to the NnrE/AIBP family. It in the C-terminal section; belongs to the NnrD/CARKD family. Requires K(+) as cofactor.

It catalyses the reaction (6S)-NADHX + ADP = AMP + phosphate + NADH + H(+). The catalysed reaction is (6S)-NADPHX + ADP = AMP + phosphate + NADPH + H(+). The enzyme catalyses (6R)-NADHX = (6S)-NADHX. It carries out the reaction (6R)-NADPHX = (6S)-NADPHX. Functionally, bifunctional enzyme that catalyzes the epimerization of the S- and R-forms of NAD(P)HX and the dehydration of the S-form of NAD(P)HX at the expense of ADP, which is converted to AMP. This allows the repair of both epimers of NAD(P)HX, a damaged form of NAD(P)H that is a result of enzymatic or heat-dependent hydration. The protein is Bifunctional NAD(P)H-hydrate repair enzyme Nnr (nnr) of Methanopyrus kandleri (strain AV19 / DSM 6324 / JCM 9639 / NBRC 100938).